A 198-amino-acid chain; its full sequence is Probable molybdenum cofactor guanylyltransferase (198 aa).

GTP-binding positions include 9–11 (LAG), K22, D66, and D95. A Mg(2+)-binding site is contributed by D95.

The protein belongs to the MobA family. Mg(2+) serves as cofactor.

Its subcellular location is the cytoplasm. It carries out the reaction Mo-molybdopterin + GTP + H(+) = Mo-molybdopterin guanine dinucleotide + diphosphate. Its function is as follows. Transfers a GMP moiety from GTP to Mo-molybdopterin (Mo-MPT) cofactor (Moco or molybdenum cofactor) to form Mo-molybdopterin guanine dinucleotide (Mo-MGD) cofactor. In Clostridium perfringens (strain 13 / Type A), this protein is Probable molybdenum cofactor guanylyltransferase.